A 1089-amino-acid chain; its full sequence is Translocase of chloroplast 120, chloroplastic (1089 aa).

Gly-2 is modified (N-acetylglycine). Disordered stretches follow at residues 158–179, 255–339, and 353–381; these read ATEDVNLENGNTHSSSENGVVS, TLSP…GLGR, and QPRVNGNVSHNQPQQAEDSTTAETDEHDE. Polar residues predominate over residues 165 to 176; that stretch reads ENGNTHSSSENG. Phosphoserine is present on residues Ser-179, Ser-263, and Ser-283. Positions 300–312 are enriched in basic and acidic residues; that stretch reads EIKESQHMERESE. Residues 327–339 show a composition bias toward low complexity; sequence AALPPARPAGLGR. A compositionally biased stretch (polar residues) spans 353 to 374; that stretch reads QPRVNGNVSHNQPQQAEDSTTA. Residues 454 to 683 enclose the AIG1-type G domain; it reads DFSCTIMVLG…KLQDNIPGGQ (230 aa). Residues 463 to 470 form a G1 region; it reads GKSGVGKS. GTP is bound by residues 466 to 471 and 485 to 490; these read GVGKSA and DAFQVG. Ser-470 is a Mg(2+) binding site. The homodimerization stretch occupies residues 485–488; sequence DAFQ. Residues 489–493 form a G2 region; the sequence is VGTKK. The G3 stretch occupies residues 510-513; the sequence is DTPG. A homodimerization region spans residues 548–553; that stretch reads RLDMQS. The tract at residues 582–585 is G4; that stretch reads THAA. GTP contacts are provided by residues His-583 and 631 to 632; that span reads EN. Positions 631 to 633 are G5; sequence ENH. Residues 710–748 are disordered; the sequence is PEQQYDDEDDEDDLDESSDSEEESEYDELPPFKRLTKAE. Residues 713 to 737 show a composition bias toward acidic residues; it reads QYDDEDDEDDLDESSDSEEESEYDE. A coiled-coil region spans residues 767–788; it reads REKLFMKRQMKEERKRRKLLKK. The chain crosses the membrane as a helical span at residues 1064 to 1080; the sequence is LAVVALVPLFKKLLTYY.

The protein belongs to the TRAFAC class TrmE-Era-EngA-EngB-Septin-like GTPase superfamily. AIG1/Toc34/Toc159-like paraseptin GTPase family. TOC159 subfamily. As to quaternary structure, homodimer. Part of the TOC core complex that includes 1 protein for the specific recognition of transit peptides surrounded by a ring composed of four proteins forming translocation channels, and four to five GTP-binding proteins providing energy. This core complex can interact with components of the TIC complex to form a larger import complex. Chloroplastic protein precursor such as prSS (precursor of the RuBisCO small subunit) interacts with these complexes. The TOC complex contains a specific subset of polar lipids such as digalactosyldiacylglyceride (DGDG), phosphatidylcholine (PC) and phosphatidylglycerol (PG). Mg(2+) serves as cofactor. Post-translationally, phosphorylated by KOC1. In terms of tissue distribution, expressed in seedlings, flowers, and roots.

The protein localises to the plastid. It is found in the chloroplast outer membrane. The protein resides in the cytoplasm. GTPase involved in protein precursor import into chloroplasts. Seems to recognize chloroplast-destined precursor proteins and regulate their presentation to the translocation channel through GTP hydrolysis. Probably specialized in the import of nuclear encoded non-photosynthetic preproteins from the cytoplasm to the chloroplast. The polypeptide is Translocase of chloroplast 120, chloroplastic (Arabidopsis thaliana (Mouse-ear cress)).